A 452-amino-acid polypeptide reads, in one-letter code: Phosphoglucosamine mutase (452 aa).

The Phosphoserine intermediate role is filled by Ser101. Residues Ser101, Asp241, Asp243, and Asp245 each coordinate Mg(2+). A Phosphoserine modification is found at Ser101.

It belongs to the phosphohexose mutase family. It depends on Mg(2+) as a cofactor. Activated by phosphorylation.

The enzyme catalyses alpha-D-glucosamine 1-phosphate = D-glucosamine 6-phosphate. In terms of biological role, catalyzes the conversion of glucosamine-6-phosphate to glucosamine-1-phosphate. This is Phosphoglucosamine mutase from Lactococcus lactis subsp. cremoris (strain MG1363).